Consider the following 297-residue polypeptide: 4-hydroxy-tetrahydrodipicolinate synthase (297 aa).

Threonine 50 contacts pyruvate. Tyrosine 139 serves as the catalytic Proton donor/acceptor. The Schiff-base intermediate with substrate role is filled by lysine 167. Residue valine 209 coordinates pyruvate.

This sequence belongs to the DapA family. As to quaternary structure, homotetramer; dimer of dimers.

It localises to the cytoplasm. It carries out the reaction L-aspartate 4-semialdehyde + pyruvate = (2S,4S)-4-hydroxy-2,3,4,5-tetrahydrodipicolinate + H2O + H(+). It participates in amino-acid biosynthesis; L-lysine biosynthesis via DAP pathway; (S)-tetrahydrodipicolinate from L-aspartate: step 3/4. Functionally, catalyzes the condensation of (S)-aspartate-beta-semialdehyde [(S)-ASA] and pyruvate to 4-hydroxy-tetrahydrodipicolinate (HTPA). The polypeptide is 4-hydroxy-tetrahydrodipicolinate synthase (Microcystis aeruginosa (strain NIES-843 / IAM M-2473)).